Reading from the N-terminus, the 65-residue chain is Large ribosomal subunit protein bL35 (65 aa).

The protein belongs to the bacterial ribosomal protein bL35 family.

The chain is Large ribosomal subunit protein bL35 from Borrelia turicatae (strain 91E135).